The sequence spans 1320 residues: Transcriptional activator MN1 (1320 aa).

Position 1 is an N-acetylmethionine (Met-1). Disordered stretches follow at residues Met-1 to Thr-26, Phe-92 to Pro-121, Pro-147 to Pro-219, Leu-231 to Ile-411, Ser-423 to Leu-442, Asn-474 to Leu-615, Ser-629 to Leu-819, Gly-840 to Ile-1150, and Pro-1247 to Gln-1273. Residues His-98–His-113 are compositionally biased toward basic residues. Composition is skewed to low complexity over residues Ser-202 to Ser-214 and Gln-291 to Gln-309. Positions Met-338–Gly-366 are enriched in pro residues. Over residues Phe-498–His-514 the composition is skewed to pro residues. 2 stretches are compositionally biased toward low complexity: residues Gln-523–Gln-550 and Arg-564–Leu-578. Composition is skewed to gly residues over residues Gly-582–Gly-596 and Gln-701–Gly-710. Residues Ser-759 to Ser-768 are compositionally biased toward low complexity. Residues Ala-769–Ala-784 are compositionally biased toward gly residues. Composition is skewed to low complexity over residues Ser-798 to Ser-809 and Gly-895 to Gly-905. The span at Asp-914 to Asn-930 shows a compositional bias: polar residues. 2 positions are modified to phosphoserine: Ser-950 and Ser-954. A compositionally biased stretch (low complexity) spans Gly-973–Ala-984. Ser-1007 is subject to Phosphoserine. The span at Glu-1048–Pro-1066 shows a compositional bias: polar residues. Ser-1081 is subject to Phosphoserine. The span at Tyr-1118–Gly-1128 shows a compositional bias: gly residues.

In terms of assembly, interacts with PBX1, PKNOX1, ZBTB24, E2F7, RING1. In terms of tissue distribution, widely expressed in fetal and adult tissues. Highest expression is observed in fetal brain and skeletal muscle, and adult skeletal muscle.

It localises to the nucleus. In terms of biological role, transcriptional activator which specifically regulates expression of TBX22 in the posterior region of the developing palate. Required during later stages of palate development for growth and medial fusion of the palatal shelves. Promotes maturation and normal function of calvarial osteoblasts, including expression of the osteoclastogenic cytokine TNFSF11/RANKL. Necessary for normal development of the membranous bones of the skull. May play a role in tumor suppression. The chain is Transcriptional activator MN1 (MN1) from Homo sapiens (Human).